The following is a 126-amino-acid chain: uncharacterized protein (126 aa).

This is an uncharacterized protein from His1 virus (isolate Australia/Victoria) (His1V).